The primary structure comprises 119 residues: Large ribosomal subunit protein bL20 (119 aa).

It belongs to the bacterial ribosomal protein bL20 family.

In terms of biological role, binds directly to 23S ribosomal RNA and is necessary for the in vitro assembly process of the 50S ribosomal subunit. It is not involved in the protein synthesizing functions of that subunit. The chain is Large ribosomal subunit protein bL20 from Aromatoleum aromaticum (strain DSM 19018 / LMG 30748 / EbN1) (Azoarcus sp. (strain EbN1)).